Reading from the N-terminus, the 630-residue chain is Phosphomethylpyrimidine synthase (630 aa).

Disordered stretches follow at residues 1 to 22 and 97 to 120; these read MADI…TTGP and AQRE…VPAF. Residues Asn224, Met253, Tyr282, His318, 338 to 340, 379 to 382, and Glu418 contribute to the substrate site; these read SRG and DGLR. Zn(2+) is bound at residue His422. A substrate-binding site is contributed by Tyr445. His486 contributes to the Zn(2+) binding site. [4Fe-4S] cluster-binding residues include Cys566, Cys569, and Cys574.

This sequence belongs to the ThiC family. As to quaternary structure, homodimer. Requires [4Fe-4S] cluster as cofactor.

The catalysed reaction is 5-amino-1-(5-phospho-beta-D-ribosyl)imidazole + S-adenosyl-L-methionine = 4-amino-2-methyl-5-(phosphooxymethyl)pyrimidine + CO + 5'-deoxyadenosine + formate + L-methionine + 3 H(+). Its pathway is cofactor biosynthesis; thiamine diphosphate biosynthesis. In terms of biological role, catalyzes the synthesis of the hydroxymethylpyrimidine phosphate (HMP-P) moiety of thiamine from aminoimidazole ribotide (AIR) in a radical S-adenosyl-L-methionine (SAM)-dependent reaction. In Sphingopyxis alaskensis (strain DSM 13593 / LMG 18877 / RB2256) (Sphingomonas alaskensis), this protein is Phosphomethylpyrimidine synthase.